Consider the following 398-residue polypeptide: Enoyl-[acyl-carrier-protein] reductase [NADH] (398 aa).

Residues 48–53 (GSSTGY), 74–75 (FE), 111–112 (DA), and 139–140 (LA) contribute to the NAD(+) site. Position 225 (Tyr225) interacts with substrate. Tyr235 functions as the Proton donor in the catalytic mechanism. NAD(+)-binding positions include Lys244 and 273–275 (VVT).

The protein belongs to the TER reductase family. In terms of assembly, monomer.

The enzyme catalyses a 2,3-saturated acyl-[ACP] + NAD(+) = a (2E)-enoyl-[ACP] + NADH + H(+). It participates in lipid metabolism; fatty acid biosynthesis. In terms of biological role, involved in the final reduction of the elongation cycle of fatty acid synthesis (FAS II). Catalyzes the reduction of a carbon-carbon double bond in an enoyl moiety that is covalently linked to an acyl carrier protein (ACP). This is Enoyl-[acyl-carrier-protein] reductase [NADH] from Pseudomonas paraeruginosa (strain DSM 24068 / PA7) (Pseudomonas aeruginosa (strain PA7)).